Here is a 115-residue protein sequence, read N- to C-terminus: Phosphoribosyl-ATP pyrophosphatase (115 aa).

Belongs to the PRA-PH family.

Its subcellular location is the cytoplasm. It catalyses the reaction 1-(5-phospho-beta-D-ribosyl)-ATP + H2O = 1-(5-phospho-beta-D-ribosyl)-5'-AMP + diphosphate + H(+). It participates in amino-acid biosynthesis; L-histidine biosynthesis; L-histidine from 5-phospho-alpha-D-ribose 1-diphosphate: step 2/9. The protein is Phosphoribosyl-ATP pyrophosphatase of Saccharophagus degradans (strain 2-40 / ATCC 43961 / DSM 17024).